A 238-amino-acid chain; its full sequence is Sugar fermentation stimulation protein homolog (238 aa).

This sequence belongs to the SfsA family.

The polypeptide is Sugar fermentation stimulation protein homolog (Shewanella denitrificans (strain OS217 / ATCC BAA-1090 / DSM 15013)).